Consider the following 123-residue polypeptide: Small ribosomal subunit protein uS12 (123 aa).

D89 is subject to 3-methylthioaspartic acid.

Belongs to the universal ribosomal protein uS12 family. As to quaternary structure, part of the 30S ribosomal subunit. Contacts proteins S8 and S17. May interact with IF1 in the 30S initiation complex.

In terms of biological role, with S4 and S5 plays an important role in translational accuracy. Functionally, interacts with and stabilizes bases of the 16S rRNA that are involved in tRNA selection in the A site and with the mRNA backbone. Located at the interface of the 30S and 50S subunits, it traverses the body of the 30S subunit contacting proteins on the other side and probably holding the rRNA structure together. The combined cluster of proteins S8, S12 and S17 appears to hold together the shoulder and platform of the 30S subunit. The protein is Small ribosomal subunit protein uS12 of Nitrobacter winogradskyi (strain ATCC 25391 / DSM 10237 / CIP 104748 / NCIMB 11846 / Nb-255).